Here is a 126-residue protein sequence, read N- to C-terminus: Adenosine 5'-monophosphoramidase HINT1 (126 aa).

Residue Ala-2 is modified to N-acetylalanine. Residues 18–126 (IFGKIIRKEI…GGRQMHWPPG (109 aa)) enclose the HIT domain. Residues Lys-21 and Lys-30 each carry the N6-acetyllysine modification. An AMP-binding site is contributed by 43–44 (DI). Phosphoserine occurs at positions 45 and 72. AMP contacts are provided by residues Asn-99, 105-107 (GQS), and 112-114 (HLH). A Histidine triad motif motif is present at residues 110 to 114 (HVHLH). The active-site Tele-AMP-histidine intermediate is His-112.

Belongs to the HINT family. In terms of assembly, homodimer. Interacts with CDK7. Interacts with RUVBL1 and RUVBL2 and is associated with the LEF1/TCF1-CTNNB1 complex and with a KAT5 histone acetyltransferase complex. Identified in a complex with MITF and CTNNB1. Interacts with CDC34 and RBX1, and is part of a SCF (SKP2-CUL1-F-box protein) E3 ubiquitin-protein ligase complex. Interacts with SUMO1, SUMO2 and RGS17. Interacts with the Ten-1 ICD form of TENM1. Interacts with CALM1; interaction increases in the presence of calcium ions.

It is found in the cytoplasm. Its subcellular location is the nucleus. The catalysed reaction is adenosine 5'-phosphoramidate + H2O = AMP + NH4(+). Exhibits adenosine 5'-monophosphoramidase activity, hydrolyzing purine nucleotide phosphoramidates with a single phosphate group such as adenosine 5'monophosphoramidate (AMP-NH2) to yield AMP and NH2. Hydrolyzes adenosine 5'monophosphomorpholidate (AMP-morpholidate) and guanosine 5'monophosphomorpholidate (GMP-morpholidate). Hydrolyzes lysyl-AMP (AMP-N-epsilon-(N-alpha-acetyl lysine methyl ester)) generated by lysine tRNA ligase, as well as Met-AMP, His-AMP and Asp-AMP, lysyl-GMP (GMP-N-epsilon-(N-alpha-acetyl lysine methyl ester)) and AMP-N-alanine methyl ester. Can also convert adenosine 5'-O-phosphorothioate and guanosine 5'-O-phosphorothioate to the corresponding nucleoside 5'-O-phosphates with concomitant release of hydrogen sulfide. In addition, functions as a scaffolding protein that modulates transcriptional activation by the LEF1/TCF1-CTNNB1 complex and by the complex formed with MITF and CTNNB1. Modulates p53/TP53 levels and p53/TP53-mediated apoptosis. Modulates proteasomal degradation of target proteins by the SCF (SKP2-CUL1-F-box protein) E3 ubiquitin-protein ligase complex. Also exhibits SUMO-specific isopeptidase activity, deconjugating SUMO1 from RANGAP1 and RGS17. This chain is Adenosine 5'-monophosphoramidase HINT1 (HINT1), found in Pongo abelii (Sumatran orangutan).